A 745-amino-acid polypeptide reads, in one-letter code: 5-methyltetrahydropteroyltriglutamate--homocysteine methyltransferase (745 aa).

5-methyltetrahydropteroyltri-L-glutamate contacts are provided by residues 16–19 (REWK) and lysine 110. L-homocysteine is bound by residues 420 to 422 (IGS) and glutamate 473. L-methionine contacts are provided by residues 420–422 (IGS) and glutamate 473. Residue tryptophan 550 coordinates 5-methyltetrahydropteroyltri-L-glutamate. Aspartate 588 is a binding site for L-homocysteine. L-methionine is bound at residue aspartate 588. Glutamate 594 lines the 5-methyltetrahydropteroyltri-L-glutamate pocket. Positions 630, 632, and 654 each coordinate Zn(2+). The active-site Proton donor is the histidine 683. Zn(2+) is bound at residue cysteine 715.

The protein belongs to the vitamin-B12 independent methionine synthase family. It depends on Zn(2+) as a cofactor.

It catalyses the reaction 5-methyltetrahydropteroyltri-L-glutamate + L-homocysteine = tetrahydropteroyltri-L-glutamate + L-methionine. The protein operates within amino-acid biosynthesis; L-methionine biosynthesis via de novo pathway; L-methionine from L-homocysteine (MetE route): step 1/1. In terms of biological role, catalyzes the transfer of a methyl group from 5-methyltetrahydrofolate to homocysteine resulting in methionine formation. The chain is 5-methyltetrahydropteroyltriglutamate--homocysteine methyltransferase from Streptococcus agalactiae serotype III (strain NEM316).